The sequence spans 828 residues: MDVGYVCEWDKRPRTSHCPSIPLVCAWSCRNLIAFTTDQRNEEEKDITNLIHILDTEHPWDVYSINSGHQEVITSLEWDQSGSRLLSADADGRIKCWGMTDHLANSWQSLVGSEVDGDPIVALSWLHNGVKLALHVEKSGVSSFGEKFSRVKFSPSLTLFGGKPMEGWIAVTVSGLVTVSLLKPNGQVLTATESLCRLRCRVALADIAFTGGGNIVVATCDGSSTSPVQFYKVCVSVVSEKCKIDTEILPSLFMRCTTDPARKDKFPAVTHLKFLARDMSEQVLLCASNQCSSIAECWSLRKEGLPLNNIFQQLSPAVSDKQPMILKWRILSATNELERVSAVALPKLPISLTNTDIKVASETKFYPGLGLALAFHDGNVQIVHRLSLQPMAVLYGSSLRPSEEPSLKRQRSPTPCIHFKALQMSWTSLALVGLDTQGKLSMLRVSPSMGHSLDMSTSLRHLLFLLEYCMVTGYDWWDILLHVQPGMVHNLVEKLNEEYTRQNAALQQVLSTRILAMKASLCKLSQTTVTRVCDYHAKLFLISISCTLKSLLRPHVLNTPDKSPGDRLTEICNKFTDTDIDKVMINLKTEEFVLDMPTLQSLQQLIQWLGDFVLYLLASLPNQGSSVRPGHSFLRDGASLGTLREMMVMIRIWGLLKPSCLPVYTATSDTQDSMSLLFRLLTRLWLCCRDESHPCDPDESLIDECCLLPSQLLIPNMDWLPLGNGIISRLQSKLPLRLQFGKPPVAPSYASVQYEAYTRSPTQPKIDHLRRLHLGTFPTEPCKSCTRCGCVTMLKSPNKATAVKQWEQRWIKTCLCGGLWRKMPHTYS.

WD repeat units follow at residues 68–107, 199–241, 264–308, 622–663, and 777–816; these read GHQE…ANSW, RCRV…VSEK, DKFP…LPLN, NQGS…CLPV, and FPTE…TCLC.

Belongs to the Mediator complex subunit 16 family. Component of the Mediator complex.

It is found in the nucleus. Functionally, component of the Mediator complex, a coactivator involved in the regulated transcription of nearly all RNA polymerase II-dependent genes. Mediator functions as a bridge to convey information from gene-specific regulatory proteins to the basal RNA polymerase II transcription machinery. Mediator is recruited to promoters by direct interactions with regulatory proteins and serves as a scaffold for the assembly of a functional preinitiation complex with RNA polymerase II and the general transcription factors. This chain is Mediator of RNA polymerase II transcription subunit 16 (med16), found in Xenopus tropicalis (Western clawed frog).